The sequence spans 568 residues: DNA ligase (568 aa).

Glu-249 lines the ATP pocket. Lys-251 (N6-AMP-lysine intermediate) is an active-site residue. Positions 256, 271, 301, 342, 418, and 424 each coordinate ATP.

Belongs to the ATP-dependent DNA ligase family. It depends on Mg(2+) as a cofactor.

The catalysed reaction is ATP + (deoxyribonucleotide)n-3'-hydroxyl + 5'-phospho-(deoxyribonucleotide)m = (deoxyribonucleotide)n+m + AMP + diphosphate.. In terms of biological role, DNA ligase that seals nicks in double-stranded DNA during DNA replication, DNA recombination and DNA repair. This Methanocella arvoryzae (strain DSM 22066 / NBRC 105507 / MRE50) protein is DNA ligase.